The following is a 248-amino-acid chain: Ribonuclease 3 (248 aa).

The region spanning 16-145 (TEGLETSIGY…LLAAMYLDGG (130 aa)) is the RNase III domain. E58 contributes to the Mg(2+) binding site. The active site involves D62. The Mg(2+) site is built by N131 and E134. E134 is a catalytic residue. A DRBM domain is found at 172–241 (DFKTDFQELA…ARQCLERLET (70 aa)).

Belongs to the ribonuclease III family. In terms of assembly, homodimer. Mg(2+) is required as a cofactor.

The protein localises to the cytoplasm. The enzyme catalyses Endonucleolytic cleavage to 5'-phosphomonoester.. Digests double-stranded RNA. Involved in the processing of primary rRNA transcript to yield the immediate precursors to the large and small rRNAs (23S and 16S). Processes some mRNAs, and tRNAs when they are encoded in the rRNA operon. Processes pre-crRNA and tracrRNA of type II CRISPR loci if present in the organism. The protein is Ribonuclease 3 of Geobacter sulfurreducens (strain ATCC 51573 / DSM 12127 / PCA).